Reading from the N-terminus, the 349-residue chain is Nicotinate-nucleotide--dimethylbenzimidazole phosphoribosyltransferase (349 aa).

Residue Glu-318 is the Proton acceptor of the active site.

The protein belongs to the CobT family.

The enzyme catalyses 5,6-dimethylbenzimidazole + nicotinate beta-D-ribonucleotide = alpha-ribazole 5'-phosphate + nicotinate + H(+). It functions in the pathway nucleoside biosynthesis; alpha-ribazole biosynthesis; alpha-ribazole from 5,6-dimethylbenzimidazole: step 1/2. Functionally, catalyzes the synthesis of alpha-ribazole-5'-phosphate from nicotinate mononucleotide (NAMN) and 5,6-dimethylbenzimidazole (DMB). This is Nicotinate-nucleotide--dimethylbenzimidazole phosphoribosyltransferase from Alkaliphilus metalliredigens (strain QYMF).